Here is a 330-residue protein sequence, read N- to C-terminus: DNA-directed RNA polymerase subunit alpha (330 aa).

Residues 1–236 (MQGSVTEFLK…EQLDAFVDLR (236 aa)) form an alpha N-terminal domain (alpha-NTD) region. An alpha C-terminal domain (alpha-CTD) region spans residues 250–330 (FDPILLRPVD…NWPPASIAED (81 aa)).

The protein belongs to the RNA polymerase alpha chain family. As to quaternary structure, homodimer. The RNAP catalytic core consists of 2 alpha, 1 beta, 1 beta' and 1 omega subunit. When a sigma factor is associated with the core the holoenzyme is formed, which can initiate transcription.

The enzyme catalyses RNA(n) + a ribonucleoside 5'-triphosphate = RNA(n+1) + diphosphate. Its function is as follows. DNA-dependent RNA polymerase catalyzes the transcription of DNA into RNA using the four ribonucleoside triphosphates as substrates. This chain is DNA-directed RNA polymerase subunit alpha, found in Vibrio vulnificus (strain CMCP6).